The chain runs to 664 residues: Bifunctional polymyxin resistance protein ArnA (664 aa).

The segment at 1–308 is formyltransferase ArnAFT; it reads MSTKAVVFAY…EFGLVAGSQM (308 aa). H106 acts as the Proton donor; for formyltransferase activity in catalysis. (6R)-10-formyltetrahydrofolate is bound by residues R116 and 138 to 142; that span reads VKRAD. A dehydrogenase ArnADH region spans residues 318–664; sequence RRTRVLILGV…EAMAEKADQC (347 aa). Residues D351 and 372–373 contribute to the NAD(+) site; that span reads DI. Residues A397, Y402, and 436-437 contribute to the UDP-alpha-D-glucuronate site; that span reads TS. E438 (proton acceptor; for decarboxylase activity) is an active-site residue. Residues R464, N495, 529 to 538, and Y616 contribute to the UDP-alpha-D-glucuronate site; that span reads RLVDGGAQKR. Catalysis depends on R622, which acts as the Proton donor; for decarboxylase activity.

It in the N-terminal section; belongs to the Fmt family. UDP-L-Ara4N formyltransferase subfamily. In the C-terminal section; belongs to the NAD(P)-dependent epimerase/dehydratase family. UDP-glucuronic acid decarboxylase subfamily. Homohexamer, formed by a dimer of trimers.

It catalyses the reaction UDP-alpha-D-glucuronate + NAD(+) = UDP-beta-L-threo-pentopyranos-4-ulose + CO2 + NADH. The catalysed reaction is UDP-4-amino-4-deoxy-beta-L-arabinose + (6R)-10-formyltetrahydrofolate = UDP-4-deoxy-4-formamido-beta-L-arabinose + (6S)-5,6,7,8-tetrahydrofolate + H(+). It participates in nucleotide-sugar biosynthesis; UDP-4-deoxy-4-formamido-beta-L-arabinose biosynthesis; UDP-4-deoxy-4-formamido-beta-L-arabinose from UDP-alpha-D-glucuronate: step 1/3. It functions in the pathway nucleotide-sugar biosynthesis; UDP-4-deoxy-4-formamido-beta-L-arabinose biosynthesis; UDP-4-deoxy-4-formamido-beta-L-arabinose from UDP-alpha-D-glucuronate: step 3/3. The protein operates within bacterial outer membrane biogenesis; lipopolysaccharide biosynthesis. Functionally, bifunctional enzyme that catalyzes the oxidative decarboxylation of UDP-glucuronic acid (UDP-GlcUA) to UDP-4-keto-arabinose (UDP-Ara4O) and the addition of a formyl group to UDP-4-amino-4-deoxy-L-arabinose (UDP-L-Ara4N) to form UDP-L-4-formamido-arabinose (UDP-L-Ara4FN). The modified arabinose is attached to lipid A and is required for resistance to polymyxin and cationic antimicrobial peptides. This Pseudomonas syringae pv. syringae (strain B728a) protein is Bifunctional polymyxin resistance protein ArnA.